The chain runs to 292 residues: Ribosomal protein L11 methyltransferase (292 aa).

S-adenosyl-L-methionine contacts are provided by T136, G159, D181, and N228.

Belongs to the methyltransferase superfamily. PrmA family.

It is found in the cytoplasm. It carries out the reaction L-lysyl-[protein] + 3 S-adenosyl-L-methionine = N(6),N(6),N(6)-trimethyl-L-lysyl-[protein] + 3 S-adenosyl-L-homocysteine + 3 H(+). In terms of biological role, methylates ribosomal protein L11. The protein is Ribosomal protein L11 methyltransferase of Rhizobium leguminosarum bv. trifolii (strain WSM2304).